A 916-amino-acid polypeptide reads, in one-letter code: Phosphoenolpyruvate carboxylase (916 aa).

Residues His-144 and Lys-578 contribute to the active site.

Belongs to the PEPCase type 1 family. The cofactor is Mg(2+).

The catalysed reaction is oxaloacetate + phosphate = phosphoenolpyruvate + hydrogencarbonate. Its function is as follows. Forms oxaloacetate, a four-carbon dicarboxylic acid source for the tricarboxylic acid cycle. The chain is Phosphoenolpyruvate carboxylase from Aromatoleum aromaticum (strain DSM 19018 / LMG 30748 / EbN1) (Azoarcus sp. (strain EbN1)).